A 355-amino-acid chain; its full sequence is N5-carboxyaminoimidazole ribonucleotide synthase (355 aa).

ATP is bound by residues R80, K120, 125–131 (GYDGRGQ), 153–156 (EQGI), E161, H184, and 237–238 (NE). An ATP-grasp domain is found at 84-267 (KQLFDKLHLP…QFELHLRAIT (184 aa)).

The protein belongs to the PurK/PurT family. In terms of assembly, homodimer.

It carries out the reaction 5-amino-1-(5-phospho-beta-D-ribosyl)imidazole + hydrogencarbonate + ATP = 5-carboxyamino-1-(5-phospho-D-ribosyl)imidazole + ADP + phosphate + 2 H(+). It functions in the pathway purine metabolism; IMP biosynthesis via de novo pathway; 5-amino-1-(5-phospho-D-ribosyl)imidazole-4-carboxylate from 5-amino-1-(5-phospho-D-ribosyl)imidazole (N5-CAIR route): step 1/2. Its function is as follows. Catalyzes the ATP-dependent conversion of 5-aminoimidazole ribonucleotide (AIR) and HCO(3)(-) to N5-carboxyaminoimidazole ribonucleotide (N5-CAIR). The protein is N5-carboxyaminoimidazole ribonucleotide synthase of Escherichia coli (strain K12).